A 166-amino-acid chain; its full sequence is SsrA-binding protein (166 aa).

Positions 146-166 (KRAAEKEKQSKKDVKAAMERY) are disordered.

The protein belongs to the SmpB family.

Its subcellular location is the cytoplasm. In terms of biological role, required for rescue of stalled ribosomes mediated by trans-translation. Binds to transfer-messenger RNA (tmRNA), required for stable association of tmRNA with ribosomes. tmRNA and SmpB together mimic tRNA shape, replacing the anticodon stem-loop with SmpB. tmRNA is encoded by the ssrA gene; the 2 termini fold to resemble tRNA(Ala) and it encodes a 'tag peptide', a short internal open reading frame. During trans-translation Ala-aminoacylated tmRNA acts like a tRNA, entering the A-site of stalled ribosomes, displacing the stalled mRNA. The ribosome then switches to translate the ORF on the tmRNA; the nascent peptide is terminated with the 'tag peptide' encoded by the tmRNA and targeted for degradation. The ribosome is freed to recommence translation, which seems to be the essential function of trans-translation. The chain is SsrA-binding protein from Synechococcus sp. (strain CC9605).